The sequence spans 876 residues: Alanine--tRNA ligase (876 aa).

At K74 the chain carries N6-acetyllysine. Zn(2+) contacts are provided by H564, H568, C666, and H670.

The protein belongs to the class-II aminoacyl-tRNA synthetase family. In terms of assembly, homotetramer. Zn(2+) is required as a cofactor.

The protein localises to the cytoplasm. It carries out the reaction tRNA(Ala) + L-alanine + ATP = L-alanyl-tRNA(Ala) + AMP + diphosphate. Functionally, catalyzes the attachment of alanine to tRNA(Ala) in a two-step reaction: alanine is first activated by ATP to form Ala-AMP and then transferred to the acceptor end of tRNA(Ala). Also edits incorrectly charged Ser-tRNA(Ala) and Gly-tRNA(Ala) via its editing domain. This Escherichia coli O1:K1 / APEC protein is Alanine--tRNA ligase.